A 310-amino-acid polypeptide reads, in one-letter code: Tagatose-6-phosphate kinase (310 aa).

Belongs to the carbohydrate kinase PfkB family. LacC subfamily.

The catalysed reaction is D-tagatofuranose 6-phosphate + ATP = D-tagatofuranose 1,6-bisphosphate + ADP + H(+). Its pathway is carbohydrate metabolism; D-tagatose 6-phosphate degradation; D-glyceraldehyde 3-phosphate and glycerone phosphate from D-tagatose 6-phosphate: step 1/2. This chain is Tagatose-6-phosphate kinase, found in Staphylococcus aureus (strain Mu3 / ATCC 700698).